The primary structure comprises 474 residues: Glutathione synthetase (474 aa).

Alanine 2 bears the N-acetylalanine mark. Arginine 125 contributes to the substrate binding site. Glutamate 144 contacts ATP. Residues glutamate 144 and asparagine 146 each contribute to the Mg(2+) site. Substrate-binding positions include isoleucine 148–serine 151, glutamate 214–asparagine 216, glutamine 220, and arginine 267–tyrosine 270. ATP is bound by residues lysine 305, lysine 364–asparagine 373, tyrosine 375, and methionine 398–isoleucine 401. Glutamate 368 contributes to the Mg(2+) binding site. Position 415 is a phosphoserine (serine 415). An ATP-binding site is contributed by glutamate 425. Arginine 450 contacts substrate. Residues lysine 452 and aspartate 458 each contribute to the ATP site. Valine 461 to alanine 462 contributes to the substrate binding site.

It belongs to the eukaryotic GSH synthase family. Homodimer. It depends on Mg(2+) as a cofactor.

The catalysed reaction is gamma-L-glutamyl-L-cysteine + glycine + ATP = glutathione + ADP + phosphate + H(+). It carries out the reaction gamma-L-glutamyl-(2S)-2-aminobutanoate + glycine + ATP = ophthalmate + ADP + phosphate + H(+). Its pathway is sulfur metabolism; glutathione biosynthesis; glutathione from L-cysteine and L-glutamate: step 2/2. Its function is as follows. Catalyzes the production of glutathione from gamma-glutamylcysteine and glycine in an ATP-dependent manner. Glutathione (gamma-glutamylcysteinylglycine, GSH) is the most abundant intracellular thiol in living aerobic cells and is required for numerous processes including the protection of cells against oxidative damage, amino acid transport, the detoxification of foreign compounds, the maintenance of protein sulfhydryl groups in a reduced state and acts as a cofactor for a number of enzymes. Participates in ophthalmate biosynthesis in hepatocytes. This Mus musculus (Mouse) protein is Glutathione synthetase.